The sequence spans 411 residues: Protein translocase subunit SecY (411 aa).

Helical transmembrane passes span 11–31, 52–72, 111–131, 135–155, 163–180, 197–217, 253–273, 291–311, 349–369, and 377–397; these read IIFTLFLLVLARLGIFIPVPG, IFSGGGFSTIGIFALGIVPYI, ALGWATLQSGAISIWVKPYVF, FAFVCESVLALTAGSMIIMWL, GIGNGASLLIFQNIVSGL, SLKFGLFIAIFLLMIIITICV, VMPIVFASASMALPSYLTQII, LYLLLYCALILFFSYFYTSIV, TFLGASFLFTVALIPFIIEKV, and GLGATSLLILVGVAIDTAKQI.

Belongs to the SecY/SEC61-alpha family. Component of the plastid Sec protein translocase complex, which is composed of at least SecY, SecE and SecG.

The protein localises to the plastid. It localises to the chloroplast thylakoid membrane. In terms of biological role, the central subunit of the protein translocation channel SecYE. Consists of two halves formed by TMs 1-5 and 6-10. These two domains form a lateral gate at the front which open onto the bilayer between TMs 2 and 7, and are clamped together by SecE at the back. The channel is closed by both a pore ring composed of hydrophobic SecY resides and a short helix (helix 2A) on the extracellular side of the membrane which forms a plug. The sequence is that of Protein translocase subunit SecY from Pyropia yezoensis (Susabi-nori).